Here is a 372-residue protein sequence, read N- to C-terminus: MSEVLRGARRIVVKVGSSLVTNEGRGVDAAAIGNWCRQLASLAGQGREVLMVSSGAIAEGMKRLGWNARPKEIHELQAAAAVGQMGLAQMYESKLSEHGIGSAQVLLTHADLADRERYLNARSTLLTLLSLKVIPVINENDTVVNDEIKFGDNDTLGALVANLVDADALVILTDQPGLYSADPRKDPQARFIGEAVAGTPELERMAGGAGSSLGRGGMITKVLAAKRASSSGASTVIAWGREPDVLLRLADGEAIGTLLVARTAKLAARKQWMADHLQMRGTVVIDDGAVAKLRDEGKSLLPIGVVEVQGEFVRGDVIAVRSQVGIEIARGLANYASSEARLIARKPSSQIESLLGYSNEPEMIHRTNLVLA.

Position 14 (Lys-14) interacts with ATP. Substrate is bound by residues Ser-54, Asp-141, and Asn-153. Residue 173–174 (TD) participates in ATP binding. Residues 280 to 358 (RGTVVIDDGA…SQIESLLGYS (79 aa)) enclose the PUA domain.

The protein belongs to the glutamate 5-kinase family.

It localises to the cytoplasm. It carries out the reaction L-glutamate + ATP = L-glutamyl 5-phosphate + ADP. It functions in the pathway amino-acid biosynthesis; L-proline biosynthesis; L-glutamate 5-semialdehyde from L-glutamate: step 1/2. Catalyzes the transfer of a phosphate group to glutamate to form L-glutamate 5-phosphate. The chain is Glutamate 5-kinase from Methylibium petroleiphilum (strain ATCC BAA-1232 / LMG 22953 / PM1).